The primary structure comprises 220 residues: MAILFAVVARGTTILAKHAWCGGNFLEVTEQILAKIPSENNKLTYSHGNYLFHYICQDRIVYLCITDDDFERSRAFGFLNEVKKRFQTTYGSRAQTALPYAMNSEFSSVLAAQLKHHSENQSLDRVTETQAQVDELKGIMVRNIDLVAQRGERLELLIDKTENLVDSSVTFKTTSRNLARAMCVKNVKLTAIIVVVSIVFIYIIVSPLCGGFTWPSCVKK.

A2 bears the N-acetylalanine mark. Residues 2–188 lie on the Cytoplasmic side of the membrane; sequence AILFAVVARG…ARAMCVKNVK (187 aa). The region spanning 7-110 is the Longin domain; sequence VVARGTTILA…AMNSEFSSVL (104 aa). One can recognise a v-SNARE coiled-coil homology domain in the interval 125–185; the sequence is RVTETQAQVD…RNLARAMCVK (61 aa). A phosphoserine mark is found at S167 and S168. Residues 189 to 209 form a helical; Anchor for type IV membrane protein membrane-spanning segment; it reads LTAIIVVVSIVFIYIIVSPLC. Residues 210–220 are Vesicular-facing; the sequence is GGFTWPSCVKK.

Belongs to the synaptobrevin family. May interact with STX17. Component of the SNARE complex composed of STX4, SNAP23 and VAMP7 that binds SYT7 during lysosomal exocytosis. Component of the SNARE complex composed of STX7, STX8, VAMP7 and VTI1B that is required for heterotypic fusion of late endosomes with lysosomes. Interacts with PICALM. Interacts with RAB21. Expressed in brain, kidney, liver, lung, spleen and thymus. Not expressed in heart and skeletal muscle.

The protein resides in the cytoplasmic vesicle. The protein localises to the secretory vesicle membrane. It is found in the golgi apparatus. Its subcellular location is the trans-Golgi network membrane. It localises to the late endosome membrane. The protein resides in the lysosome membrane. The protein localises to the endoplasmic reticulum membrane. It is found in the phagosome membrane. Its subcellular location is the synapse. It localises to the synaptosome. Functionally, involved in the targeting and/or fusion of transport vesicles to their target membrane during transport of proteins from the early endosome to the lysosome. Required for heterotypic fusion of late endosomes with lysosomes and homotypic lysosomal fusion. Required for calcium regulated lysosomal exocytosis. Involved in the export of chylomicrons from the endoplasmic reticulum to the cis Golgi. Required for exocytosis of mediators during eosinophil and neutrophil degranulation, and target cell killing by natural killer cells. Required for focal exocytosis of late endocytic vesicles during phagosome formation. This Rattus norvegicus (Rat) protein is Vesicle-associated membrane protein 7 (Vamp7).